Reading from the N-terminus, the 383-residue chain is Pleckstrin homology domain-containing family A member 1 (383 aa).

2 consecutive PH domains span residues 7–112 (QNRI…KAIK) and 191–289 (AVIK…GAIV). At V284 the chain carries Phosphoserine. Residues 362 to 383 (LPRSSQGTSRSRLSLQESQLPK) form a disordered region. Residues 370-383 (SRSRLSLQESQLPK) are compositionally biased toward low complexity.

In terms of assembly, interacts with MPDZ and PTPN13.

The protein localises to the cytoplasm. It localises to the cell membrane. It is found in the nucleus. Its function is as follows. Binds specifically to phosphatidylinositol 3,4-diphosphate (PtdIns3,4P2), but not to other phosphoinositides. May recruit other proteins to the plasma membrane. The sequence is that of Pleckstrin homology domain-containing family A member 1 (Plekha1) from Mus musculus (Mouse).